The primary structure comprises 156 residues: Hexachlorocyclohexane dehydrochlorinase 2 (156 aa).

Aspartate 25 is an active-site residue. The Proton acceptor role is filled by histidine 73.

This sequence belongs to the HCH dehydrochlorinase family. As to quaternary structure, homotrimer.

It localises to the periplasm. It carries out the reaction gamma-hexachlorocyclohexane = (3R,4S,5S,6R)-pentachlorocyclohexene + chloride + H(+). The enzyme catalyses (3R,4S,5S,6R)-pentachlorocyclohexene = (3R,6R)-1,3,4,6-tetrachlorocyclohexa-1,4-diene + chloride + H(+). Its pathway is xenobiotic degradation; hexachlorocyclohexane degradation. Its function is as follows. Catalyzes the conversion of the important environmental pollutant gamma-hexachlorocyclohexane (gamma-HCH or lindane) to 1,3,4,6-tetrachloro-1,4-cyclohexadiene (1,4-TCDN) via gamma-pentachlorocyclohexene (gamma-PCCH). Proceeds by two successive 1,2-anti conformationally dependent dehydrochlorinations. Also shows activity with alpha- and delta-HCH, giving alpha- and delta-PCCH respectively, but not with the beta isomer. The chain is Hexachlorocyclohexane dehydrochlorinase 2 from Sphingobium indicum (strain DSM 16412 / CCM 7286 / MTCC 6364 / B90A).